The sequence spans 616 residues: uncharacterized protein (616 aa).

The protein belongs to the UbiD family.

This is an uncharacterized protein from Helicobacter pylori (strain J99 / ATCC 700824) (Campylobacter pylori J99).